The chain runs to 199 residues: Calcium-binding protein CAST (199 aa).

Residues 1 to 13 are compositionally biased toward basic and acidic residues; it reads MGSVQDENKDEFK. The segment at 1–31 is disordered; sequence MGSVQDENKDEFKQSLTRGKLKPSSSSSFRL. 4 consecutive EF-hand domains span residues 36-71, 75-110, 125-160, and 163-198; these read LNSI…LGLD, SEIE…VFFG, QDES…LGLP, and SEID…VIVP. Residues aspartate 49, asparagine 51, aspartate 53, and glutamate 60 each contribute to the Ca(2+) site. Aspartate 138, asparagine 140, aspartate 142, glutamate 149, aspartate 178, aspartate 180, arginine 182, and glutamate 187 together coordinate Ca(2+).

Not known. Probably binds 3 calcium ions. The protein is Calcium-binding protein CAST of Solanum tuberosum (Potato).